A 41-amino-acid chain; its full sequence is Large ribosomal subunit protein bL36 (41 aa).

It belongs to the bacterial ribosomal protein bL36 family.

The chain is Large ribosomal subunit protein bL36 from Phenylobacterium zucineum (strain HLK1).